The following is a 100-amino-acid chain: Urease subunit gamma (100 aa).

It belongs to the urease gamma subunit family. Heterotrimer of UreA (gamma), UreB (beta) and UreC (alpha) subunits. Three heterotrimers associate to form the active enzyme.

It is found in the cytoplasm. The catalysed reaction is urea + 2 H2O + H(+) = hydrogencarbonate + 2 NH4(+). It participates in nitrogen metabolism; urea degradation; CO(2) and NH(3) from urea (urease route): step 1/1. In Polaromonas naphthalenivorans (strain CJ2), this protein is Urease subunit gamma.